The sequence spans 289 residues: Esterase GA18864 (289 aa).

The span at 1–19 shows a compositional bias: low complexity; that stretch reads MTNNDAAVEAPSSSRASSS. Residues 1–24 form a disordered region; sequence MTNNDAAVEAPSSSRASSSKQQPK. Active-site charge relay system residues include serine 133, aspartate 191, and histidine 218. Residues 253–289 are disordered; that stretch reads VSFIESGAEDNDDDGDANDAEVAAATAAAGSDLDDSD. Acidic residues predominate over residues 259–271; it reads GAEDNDDDGDAND. Residues 272–283 show a composition bias toward low complexity; that stretch reads AEVAAATAAAGS.

Belongs to the LovG family.

This Drosophila pseudoobscura pseudoobscura (Fruit fly) protein is Esterase GA18864.